Reading from the N-terminus, the 345-residue chain is Phosphoribosylformylglycinamidine cyclo-ligase (345 aa).

This sequence belongs to the AIR synthase family.

It is found in the cytoplasm. It catalyses the reaction 2-formamido-N(1)-(5-O-phospho-beta-D-ribosyl)acetamidine + ATP = 5-amino-1-(5-phospho-beta-D-ribosyl)imidazole + ADP + phosphate + H(+). The protein operates within purine metabolism; IMP biosynthesis via de novo pathway; 5-amino-1-(5-phospho-D-ribosyl)imidazole from N(2)-formyl-N(1)-(5-phospho-D-ribosyl)glycinamide: step 2/2. The chain is Phosphoribosylformylglycinamidine cyclo-ligase from Tolumonas auensis (strain DSM 9187 / NBRC 110442 / TA 4).